The sequence spans 230 residues: 7-cyano-7-deazaguanine synthase (230 aa).

Residue 7-17 (CSGGLDSVSLA) coordinates ATP. The Zn(2+) site is built by C185, C193, C196, and C199.

The protein belongs to the QueC family. Requires Zn(2+) as cofactor.

The enzyme catalyses 7-carboxy-7-deazaguanine + NH4(+) + ATP = 7-cyano-7-deazaguanine + ADP + phosphate + H2O + H(+). It functions in the pathway purine metabolism; 7-cyano-7-deazaguanine biosynthesis. Its function is as follows. Catalyzes the ATP-dependent conversion of 7-carboxy-7-deazaguanine (CDG) to 7-cyano-7-deazaguanine (preQ(0)). The protein is 7-cyano-7-deazaguanine synthase of Ruegeria pomeroyi (strain ATCC 700808 / DSM 15171 / DSS-3) (Silicibacter pomeroyi).